The chain runs to 180 residues: NADH-quinone oxidoreductase subunit I (180 aa).

2 4Fe-4S ferredoxin-type domains span residues 50-80 (LTRD…LQKA) and 90-119 (EFFR…LTPD). The [4Fe-4S] cluster site is built by Cys60, Cys63, Cys66, Cys70, Cys99, Cys102, Cys105, and Cys109.

The protein belongs to the complex I 23 kDa subunit family. As to quaternary structure, NDH-1 is composed of 13 different subunits. Subunits NuoA, H, J, K, L, M, N constitute the membrane sector of the complex. [4Fe-4S] cluster is required as a cofactor.

Its subcellular location is the cell inner membrane. It carries out the reaction a quinone + NADH + 5 H(+)(in) = a quinol + NAD(+) + 4 H(+)(out). NDH-1 shuttles electrons from NADH, via FMN and iron-sulfur (Fe-S) centers, to quinones in the respiratory chain. The immediate electron acceptor for the enzyme in this species is believed to be ubiquinone. Couples the redox reaction to proton translocation (for every two electrons transferred, four hydrogen ions are translocated across the cytoplasmic membrane), and thus conserves the redox energy in a proton gradient. This chain is NADH-quinone oxidoreductase subunit I, found in Yersinia enterocolitica serotype O:8 / biotype 1B (strain NCTC 13174 / 8081).